A 421-amino-acid polypeptide reads, in one-letter code: Glutamate dehydrogenase (421 aa).

Lysine 105 is an active-site residue. Glycine 220 to tyrosine 226 serves as a coordination point for NAD(+).

It belongs to the Glu/Leu/Phe/Val dehydrogenases family. In terms of assembly, homohexamer.

The protein localises to the cytoplasm. Its subcellular location is the chromosome. It catalyses the reaction L-glutamate + NAD(+) + H2O = 2-oxoglutarate + NH4(+) + NADH + H(+). It carries out the reaction L-glutamate + NADP(+) + H2O = 2-oxoglutarate + NH4(+) + NADPH + H(+). This chain is Glutamate dehydrogenase (gdhA), found in Thermococcus kodakarensis (strain ATCC BAA-918 / JCM 12380 / KOD1) (Pyrococcus kodakaraensis (strain KOD1)).